A 538-amino-acid polypeptide reads, in one-letter code: MAVVSKKIPAPDKVQVKTALLSVFDKTGIVELARALSEKGVRLLSTGGTHKAIAAAGLAVTDVSEVTAFPEIMDGRVKTLHPKVHGGLLAIRDDAEHQAAMKEHGIEGIDLAVINLYPFEDVRKAGGDYPTTVENIDIGGPAMIRASAKNHAYVTTLTDPADYSELLEQLSADAGQTTYDFRKRMAAKAFARTAAYDAMIANWFAEALDIATPRHRVIGGVLREEMRYGENPHQKAAFYVTGENRPGVSTATLLQGKQLSYNNINDTDAAYELVAEFLPENGPACAIIKHANPCGVATGPSLVEAYKRALACDSVSAFGGIIALNSILDAATAEEIVKLFTEVIIAPEVTEEAKAIIARKPNLRLLSVGALPDPRVAGLTAKTVSGGLLVQNRDNALVEDMELKVVTKRAPTAQELEDMKFAFRVAKHVKSNAVVYAKDGQTAGIGAGQMSRVDSARIAAIKAEEAAKAMGLAEPLTRGSAVASEAFLPFADGLLSAIAAGATAVIQPGGSMRDQEVIDAANEHNVAMVFTGIRHFRH.

An MGS-like domain is found at 8–158 (IPAPDKVQVK…KNHAYVTTLT (151 aa)).

This sequence belongs to the PurH family.

It catalyses the reaction (6R)-10-formyltetrahydrofolate + 5-amino-1-(5-phospho-beta-D-ribosyl)imidazole-4-carboxamide = 5-formamido-1-(5-phospho-D-ribosyl)imidazole-4-carboxamide + (6S)-5,6,7,8-tetrahydrofolate. It carries out the reaction IMP + H2O = 5-formamido-1-(5-phospho-D-ribosyl)imidazole-4-carboxamide. It participates in purine metabolism; IMP biosynthesis via de novo pathway; 5-formamido-1-(5-phospho-D-ribosyl)imidazole-4-carboxamide from 5-amino-1-(5-phospho-D-ribosyl)imidazole-4-carboxamide (10-formyl THF route): step 1/1. It functions in the pathway purine metabolism; IMP biosynthesis via de novo pathway; IMP from 5-formamido-1-(5-phospho-D-ribosyl)imidazole-4-carboxamide: step 1/1. The chain is Bifunctional purine biosynthesis protein PurH from Rhizobium rhizogenes (strain K84 / ATCC BAA-868) (Agrobacterium radiobacter).